Consider the following 340-residue polypeptide: MTNKNAYAQSGVDVEAGYEVVERIKKHVARTESAGVMGALGGFGGMFDLSKTGVKEPVLISGTDGVGTKLMLAIKYDKHDTIGQDCVAMCVNDIIAAGAEPLYFLDYVATGKNEPAKLEQVVAGVAEGCVQAGAALIGGETAEMPGMYGEDDYDLAGFAVGVAEKSQIIDGSKVVEGDVLLGLASSGIHSNGYSLVRRVFADYTGEEVLPELEGKKLKEVLLEPTRIYVKAVLPLIKEELVNGIAHITGGGFIENVPRMFADDLAAEIDESKVPVLPIFKALEKYGQIKHEEMFEIFNMGVGLMLAVSPENVERVKELLDEAVYEIGRIVKKENESVIIK.

It belongs to the AIR synthase family.

It is found in the cytoplasm. It catalyses the reaction 2-formamido-N(1)-(5-O-phospho-beta-D-ribosyl)acetamidine + ATP = 5-amino-1-(5-phospho-beta-D-ribosyl)imidazole + ADP + phosphate + H(+). Its pathway is purine metabolism; IMP biosynthesis via de novo pathway; 5-amino-1-(5-phospho-D-ribosyl)imidazole from N(2)-formyl-N(1)-(5-phospho-D-ribosyl)glycinamide: step 2/2. The chain is Phosphoribosylformylglycinamidine cyclo-ligase from Streptococcus pneumoniae (strain P1031).